We begin with the raw amino-acid sequence, 392 residues long: Ameloblastin (392 aa).

An N-terminal signal peptide occupies residues 1-26; sequence MPALKIPLFKMKDMILILCLLKMSSA. Hydroxyproline is present on Pro-37. Ser-43 is subject to Phosphoserine. Disordered stretches follow at residues 86–109, 247–280, and 349–392; these read FPWMRPREHETQQPSLQPQQPGQK, TLEFDSPVAATKGPEKGEGGAQDSPVPEAHLADP, and TTLG…FQEP. Positions 97-109 are enriched in low complexity; it reads QQPSLQPQQPGQK. Over residues 359-381 the composition is skewed to polar residues; sequence VDSTATPDTQHTLMPRNKAQQPQ. The span at 382–392 shows a compositional bias: basic and acidic residues; it reads IKHDAWHFQEP.

Belongs to the ameloblastin family.

It localises to the secreted. It is found in the extracellular space. Its subcellular location is the extracellular matrix. In terms of biological role, involved in the mineralization and structural organization of enamel. This Bos taurus (Bovine) protein is Ameloblastin (AMBN).